The chain runs to 387 residues: MKFVDEVEIRVEAGDGGNGCVSFRKEKFIEYGGPNGGDGGDGGDVYLMADEGLNTLIDYRFERFHRAKRGQNGQPQNCTGKGSEDLVLKVPVGTRAVDQDTGEQIGDLTYKGQKMLVAKGGWHGLGNLRFKSSTNRSPRQRTDGTPGEIRSLKLELLLLADVGLLGLPNAGKSTLIRSVSAATPKVADYPFTTLVPNLGVVRLDTQRSFVIADIPGIIEGAADGAGLGTQFLKHLERCRILLHVIDIMPVDGSDPLENAKVIISELEQHNEKLAGKPRWVVFNKLDLVLEEEAKEITDAIIAGLDWKGEVHSISAFNRSGTKELTQKVMTFIEELPPEEEEVIDGKTVEFKWDTYHEETIAAHSQDDDLDDDDWDEDDYDVEVEYRQ.

In terms of domain architecture, Obg spans 1–159 (MKFVDEVEIR…RSLKLELLLL (159 aa)). The OBG-type G domain occupies 160 to 333 (ADVGLLGLPN…LTQKVMTFIE (174 aa)). Residues 166 to 173 (GLPNAGKS), 191 to 195 (FTTLV), 213 to 216 (DIPG), 283 to 286 (NKLD), and 314 to 316 (SAF) each bind GTP. The Mg(2+) site is built by Ser173 and Thr193. The segment at 361–387 (AAHSQDDDLDDDDWDEDDYDVEVEYRQ) is disordered. Residues 367–387 (DDLDDDDWDEDDYDVEVEYRQ) show a composition bias toward acidic residues.

Belongs to the TRAFAC class OBG-HflX-like GTPase superfamily. OBG GTPase family. In terms of assembly, monomer. Requires Mg(2+) as cofactor.

Its subcellular location is the cytoplasm. In terms of biological role, an essential GTPase which binds GTP, GDP and possibly (p)ppGpp with moderate affinity, with high nucleotide exchange rates and a fairly low GTP hydrolysis rate. Plays a role in control of the cell cycle, stress response, ribosome biogenesis and in those bacteria that undergo differentiation, in morphogenesis control. The chain is GTPase Obg from Colwellia psychrerythraea (strain 34H / ATCC BAA-681) (Vibrio psychroerythus).